Consider the following 548-residue polypeptide: MAAKDVKFGNDARVKMLRGVNVLADAVKVTLGPKGRNVVLDKSFGAPTITKDGVSVAREIELEDKFENMGAQMVKEVASKANDAAGDGTTTATVLAQSIITEGLKAVAAGMNPMDLKRGIDKAVIAAVEELKKLSVPCSDSKAIAQVGTISANSDETVGKLIAEAMEKVGKEGVITVEEGTGLQDELDVVEGMQFDRGYLSPYFINKPETGSIELESPFILLADKKISNIREMLPVLEAVAKAGKPLLIIAEDVEGEALATLVVNTMRGIVKVAAVKAPGFGDRRKAMLQDIATLTGGTVISEEIGLELEKTTLEDLGTAKRIVINKDTTIIIDGNGEEPAIQGRVSQIRQQIEEATSDYDREKLQERVAKLAGGVAVIKVGAATEVEMKEKKARVEDALHATRAAVEEGVVAGGGVALIRAASKLSELRGVNEDQNVGIKVALRAMESPLRQIVLNCGEEPSVVANTVKAGEGNYGYNAATEEYGDMIAMGILDPTKVTRSALQYAASVAGLMITTECMVTDLPKGDAPDLGGAGGMGGMGGMGGMM.

Residues 30 to 33 (TLGP), Lys51, 87 to 91 (DGTTT), Gly415, 479 to 481 (NAA), and Asp495 contribute to the ATP site.

It belongs to the chaperonin (HSP60) family. As to quaternary structure, forms a cylinder of 14 subunits composed of two heptameric rings stacked back-to-back. Interacts with the co-chaperonin GroES.

The protein resides in the cytoplasm. It carries out the reaction ATP + H2O + a folded polypeptide = ADP + phosphate + an unfolded polypeptide.. Together with its co-chaperonin GroES, plays an essential role in assisting protein folding. The GroEL-GroES system forms a nano-cage that allows encapsulation of the non-native substrate proteins and provides a physical environment optimized to promote and accelerate protein folding. The protein is Chaperonin GroEL of Serratia proteamaculans (strain 568).